The following is a 203-amino-acid chain: Thymidine kinase (203 aa).

ATP is bound by residues 21–28 and 99–102; these read GCMFAGKT and DEIQ. Residue E100 is the Proton acceptor of the active site. Zn(2+) is bound by residues C156, C159, C194, and C197.

This sequence belongs to the thymidine kinase family. Homotetramer.

It localises to the cytoplasm. The catalysed reaction is thymidine + ATP = dTMP + ADP + H(+). The polypeptide is Thymidine kinase (Mesoplasma florum (strain ATCC 33453 / NBRC 100688 / NCTC 11704 / L1) (Acholeplasma florum)).